A 296-amino-acid polypeptide reads, in one-letter code: Probable 2-(5''-triphosphoribosyl)-3'-dephosphocoenzyme-A synthase (296 aa).

It belongs to the CitG/MdcB family.

It catalyses the reaction 3'-dephospho-CoA + ATP = 2'-(5''-triphospho-alpha-D-ribosyl)-3'-dephospho-CoA + adenine. The protein is Probable 2-(5''-triphosphoribosyl)-3'-dephosphocoenzyme-A synthase of Streptococcus mutans serotype c (strain ATCC 700610 / UA159).